We begin with the raw amino-acid sequence, 197 residues long: dCTP deaminase, dUMP-forming (197 aa).

Residues 105-110, aspartate 123, 131-133, glutamine 152, tyrosine 166, lysine 174, and glutamine 178 contribute to the dCTP site; these read RSSIGR and TLE. Glutamate 133 functions as the Proton donor/acceptor in the catalytic mechanism. The tract at residues 161–183 is disordered; sequence PAERPYGHPSRDSKYIGQTRPQT. The segment covering 165–174 has biased composition (basic and acidic residues); sequence PYGHPSRDSK.

This sequence belongs to the dCTP deaminase family. Homotrimer.

It catalyses the reaction dCTP + 2 H2O = dUMP + NH4(+) + diphosphate. It participates in pyrimidine metabolism; dUMP biosynthesis; dUMP from dCTP: step 1/1. Bifunctional enzyme that catalyzes both the deamination of dCTP to dUTP and the hydrolysis of dUTP to dUMP without releasing the toxic dUTP intermediate. This chain is dCTP deaminase, dUMP-forming, found in Methanothermobacter thermautotrophicus (strain ATCC 29096 / DSM 1053 / JCM 10044 / NBRC 100330 / Delta H) (Methanobacterium thermoautotrophicum).